We begin with the raw amino-acid sequence, 467 residues long: ATP synthase subunit beta (467 aa).

Position 150–157 (150–157 (GGAGVGKT)) interacts with ATP.

It belongs to the ATPase alpha/beta chains family. As to quaternary structure, F-type ATPases have 2 components, CF(1) - the catalytic core - and CF(0) - the membrane proton channel. CF(1) has five subunits: alpha(3), beta(3), gamma(1), delta(1), epsilon(1). CF(0) has three main subunits: a(1), b(2) and c(9-12). The alpha and beta chains form an alternating ring which encloses part of the gamma chain. CF(1) is attached to CF(0) by a central stalk formed by the gamma and epsilon chains, while a peripheral stalk is formed by the delta and b chains.

It localises to the cell inner membrane. It catalyses the reaction ATP + H2O + 4 H(+)(in) = ADP + phosphate + 5 H(+)(out). In terms of biological role, produces ATP from ADP in the presence of a proton gradient across the membrane. The catalytic sites are hosted primarily by the beta subunits. The polypeptide is ATP synthase subunit beta (Aliivibrio fischeri (strain MJ11) (Vibrio fischeri)).